We begin with the raw amino-acid sequence, 762 residues long: Pyrophosphate-energized vacuolar membrane proton pump (762 aa).

Residues 1–6 (MAILGE) are Intravacuolar-facing. A helical membrane pass occupies residues 7-33 (LGTEILIPVCGVIGIVFAVAQWFIVSK). The Cytoplasmic segment spans residues 34–81 (VKVTPGAASAAAGAKNGYGDYLIEEEEGLNDHNVVVKCAEIQTAISEG). Residues 82–111 (ATSFLFTMYQYVGMFMVVFAAIIFLFLGSI) traverse the membrane as a helical segment. The Intravacuolar portion of the chain corresponds to 112 to 131 (EGFSTKGQPCTYSKGTCKPA). A disulfide bridge links Cys121 with Cys128. Residues 132-159 (LYTALFSTASFLLGAITSLVSGFLGMKI) form a helical membrane-spanning segment. The Cytoplasmic portion of the chain corresponds to 160 to 182 (ATYANARTTLEARKGVGKAFITA). Residues 183 to 212 (FRSGAVMGFLLSSSGLVVLYITINVFKMYY) traverse the membrane as a helical segment. At 213–215 (GDD) the chain is on the intravacuolar side. The helical transmembrane segment at 216 to 244 (WEGLFESITGYGLGGSSMALFGRVGGGIY) threads the bilayer. The Cytoplasmic portion of the chain corresponds to 245–282 (TKAADVGADLVGKVERNIPEDDPRNPAVIADNVGDNVG). Lys246 contacts substrate. Positions 249, 253, and 279 each coordinate Mg(2+). The helical transmembrane segment at 283–308 (DIAGMGSDLFGSYAESSCAALVVASI) threads the bilayer. Topologically, residues 309–316 (SSFGINHD) are intravacuolar. A helical membrane pass occupies residues 317–342 (FTAMCYPLLVSSVGIIVCLLTTLFAT). Residues 343–350 (DFFEIKAA) lie on the Cytoplasmic side of the membrane. The helical transmembrane segment at 351–378 (NEIEPALKKQLIISTALMTVGVAVISWL) threads the bilayer. Residues 379 to 397 (ALPAKFTIFNFGAQKEVSN) lie on the Intravacuolar side of the membrane. A helical transmembrane segment spans residues 398–421 (WGLFFCVAVGLWAGLIIGFVTEYY). Residues 422–443 (TSNAYSPVQDVADSCRTGAATN) lie on the Cytoplasmic side of the membrane. The chain crosses the membrane as a helical span at residues 444–468 (VIFGLALGYKSVIIPIFAIAVSIYV). Residues 469–474 (SFSIAA) are Intravacuolar-facing. The helical transmembrane segment at 475–501 (MYGIAMAALGMLSTMATGLAIDAYGPI) threads the bilayer. At 502–530 (SDNAGGIAEMAGMSHRIRERTDALDAAGN) the chain is on the cytoplasmic side. Mg(2+) is bound by residues Asp503 and Asn530. A helical transmembrane segment spans residues 531–559 (TTAAIGKGFAIGSAALVSLALFGAFVSRA). Topologically, residues 560–569 (GVKVVDVLSP) are intravacuolar. Residues 570–598 (KVFIGLIVGAMLPYWFSAMTMKSVGSAAL) traverse the membrane as a helical segment. The Cytoplasmic segment spans residues 599 to 627 (KMVEEVRRQFNTIPGLMEGTAKPDYATCV). A helical membrane pass occupies residues 628-656 (KISTDASIKEMIPPGALVMLTPLIVGTLF). Residue Gly657 is a topological domain, intravacuolar. A helical membrane pass occupies residues 658–685 (VETLSGVLAGALVSGVQIAISASNTGGA). At 686–728 (WDNAKKYIEAGNSEHARSLGPKGSDCHKAAVIGDTIGDPLKDT) the chain is on the cytoplasmic side. Mg(2+) contacts are provided by Asp687 and Asp723. Substrate is bound at residue Lys726. The helical transmembrane segment at 729-754 (SGPSLNILIKLMAVESLVFAPFFATY) threads the bilayer. Over 755–762 (GGLLFKYI) the chain is Intravacuolar.

It belongs to the H(+)-translocating pyrophosphatase (TC 3.A.10) family. K(+)-stimulated subfamily. As to quaternary structure, monomer.

It is found in the vacuole membrane. It catalyses the reaction diphosphate + H2O + H(+)(in) = 2 phosphate + 2 H(+)(out). Functionally, contributes to the transtonoplast (from cytosol to vacuole lumen) H(+)-electrochemical potential difference. It establishes a proton gradient of similar and often greater magnitude than the H(+)-ATPase on the same membrane. This is Pyrophosphate-energized vacuolar membrane proton pump from Hordeum vulgare (Barley).